Here is a 467-residue protein sequence, read N- to C-terminus: Chromosomal replication initiator protein DnaA (467 aa).

Positions 1 to 80 are domain I, interacts with DnaA modulators; sequence MTSELWHQCL…APRISLKIGS (80 aa). Residues 80–130 form a domain II region; the sequence is SITGNSKGQQASKDSAVGATRTTAPSRPVIADVAPSGERNVTVEGAIKHES. The segment at 131 to 347 is domain III, AAA+ region; it reads YLNPTFTFET…GALKLVIANA (217 aa). Residues G175, G177, K178, and T179 each coordinate ATP. Residues 348-467 are domain IV, binds dsDNA; that stretch reads HFTGQEITPA…YQNFMRMLTS (120 aa).

It belongs to the DnaA family. As to quaternary structure, oligomerizes as a right-handed, spiral filament on DNA at oriC.

It localises to the cytoplasm. Functionally, plays an essential role in the initiation and regulation of chromosomal replication. ATP-DnaA binds to the origin of replication (oriC) to initiate formation of the DNA replication initiation complex once per cell cycle. Binds the DnaA box (a 9 base pair repeat at the origin) and separates the double-stranded (ds)DNA. Forms a right-handed helical filament on oriC DNA; dsDNA binds to the exterior of the filament while single-stranded (ss)DNA is stabiized in the filament's interior. The ATP-DnaA-oriC complex binds and stabilizes one strand of the AT-rich DNA unwinding element (DUE), permitting loading of DNA polymerase. After initiation quickly degrades to an ADP-DnaA complex that is not apt for DNA replication. Binds acidic phospholipids. This is Chromosomal replication initiator protein DnaA from Hahella chejuensis (strain KCTC 2396).